Here is a 623-residue protein sequence, read N- to C-terminus: NADPH-dependent diflavin oxidoreductase 1 (623 aa).

The 162-residue stretch at 7 to 168 folds into the Flavodoxin-like domain; sequence IVILYGSETG…VYFEYEKKVL (162 aa). Residues 13–18, 60–63, 106–115, and Asp-142 contribute to the FMN site; these read SETGNA, STTG, and LGDSSYPKFN. The 268-residue stretch at 224–491 folds into the FAD-binding FR-type domain; it reads ESLKVGRVNI…VGPGVGLAPL (268 aa). Residues Arg-383, 413 to 416, and 445 to 448 contribute to the FAD site; these read RYYS and GICT. An NADP(+)-binding site is contributed by 538-539; it reads SR. Trp-623 lines the FAD pocket.

Belongs to the NADPH-dependent diflavin oxidoreductase NDOR1 family. The protein in the N-terminal section; belongs to the flavodoxin family. It in the C-terminal section; belongs to the flavoprotein pyridine nucleotide cytochrome reductase family. As to quaternary structure, interacts with DRE2; as part of the cytosolic iron-sulfur (Fe-S) protein assembly (CIA) machinery. The cofactor is FAD. FMN serves as cofactor.

Its subcellular location is the cytoplasm. It is found in the mitochondrion. It catalyses the reaction 2 oxidized [2Fe-2S]-[protein] + NADPH = 2 reduced [2Fe-2S]-[protein] + NADP(+) + H(+). In terms of biological role, NADPH-dependent reductase which is a central component of the cytosolic iron-sulfur (Fe-S) protein assembly (CIA) machinery. Transfers electrons from NADPH via its FAD and FMN prosthetic groups to the [2Fe-2S] cluster of DRE2, another key component of the CIA machinery. In turn, this reduced cluster provides electrons for assembly of cytosolic iron-sulfur cluster proteins. Positively controls H(2)O(2)-induced cell death. The protein is NADPH-dependent diflavin oxidoreductase 1 of Saccharomyces cerevisiae (strain ATCC 204508 / S288c) (Baker's yeast).